The following is a 2250-amino-acid chain: DNA polymerase epsilon catalytic subunit A (2250 aa).

3 disordered regions span residues 1–63, 235–259, and 1990–2010; these read MPSR…GTAA, NGHG…DKEP, and PGTE…KAAS. Positions 32-41 are enriched in gly residues; sequence GGGGGGGGVA. Basic and acidic residues predominate over residues 249–259; sequence DDTKKKKDKEP. Polar residues predominate over residues 1990–2000; the sequence is PGTEATSTMNP. Positions 2118, 2121, 2156, and 2159 each coordinate Zn(2+). Residues 2118-2159 form a CysA-type zinc finger; the sequence is CKKCNAIRDVDLCRDPDRLPSVNPDSGEMLEPARKNWVCHKC. [4Fe-4S] cluster is bound by residues cysteine 2190, cysteine 2193, cysteine 2205, and cysteine 2207. The CysB motif motif lies at 2190–2207; the sequence is CLKCSQTKSDNLAATCKC.

The protein belongs to the DNA polymerase type-B family. In terms of assembly, heterotetramer. Consists of 4 subunits: POL2, DPB2, DPB3 and DPB4. The cofactor is [4Fe-4S] cluster.

Its subcellular location is the nucleus. It catalyses the reaction DNA(n) + a 2'-deoxyribonucleoside 5'-triphosphate = DNA(n+1) + diphosphate. Functionally, DNA polymerase II participates in chromosomal DNA replication. The polypeptide is DNA polymerase epsilon catalytic subunit A (POL2) (Cryptococcus neoformans var. neoformans serotype D (strain JEC21 / ATCC MYA-565) (Filobasidiella neoformans)).